A 437-amino-acid chain; its full sequence is Dihydrofolate synthase/folylpolyglutamate synthase (437 aa).

Residue 28–30 (DLG) participates in 7,8-dihydropteroate binding. Residue 58–61 (GKGT) coordinates ATP. Ser82 provides a ligand contact to Mg(2+). Residue 120 to 123 (TYFE) participates in 7,8-dihydropteroate binding. Glu144 contributes to the Mg(2+) binding site. Residue 151–153 (LDA) coordinates 7,8-dihydropteroate. Residue His171 participates in Mg(2+) binding. ATP contacts are provided by Asn255, Arg287, and Asp316.

This sequence belongs to the folylpolyglutamate synthase family. Monomer. Requires Mg(2+) as cofactor.

It carries out the reaction 7,8-dihydropteroate + L-glutamate + ATP = 7,8-dihydrofolate + ADP + phosphate + H(+). It catalyses the reaction (6S)-5,6,7,8-tetrahydrofolyl-(gamma-L-Glu)(n) + L-glutamate + ATP = (6S)-5,6,7,8-tetrahydrofolyl-(gamma-L-Glu)(n+1) + ADP + phosphate + H(+). The enzyme catalyses 10-formyltetrahydrofolyl-(gamma-L-Glu)(n) + L-glutamate + ATP = 10-formyltetrahydrofolyl-(gamma-L-Glu)(n+1) + ADP + phosphate + H(+). The catalysed reaction is (6R)-5,10-methylenetetrahydrofolyl-(gamma-L-Glu)(n) + L-glutamate + ATP = (6R)-5,10-methylenetetrahydrofolyl-(gamma-L-Glu)(n+1) + ADP + phosphate + H(+). The protein operates within cofactor biosynthesis; tetrahydrofolate biosynthesis; 7,8-dihydrofolate from 2-amino-4-hydroxy-6-hydroxymethyl-7,8-dihydropteridine diphosphate and 4-aminobenzoate: step 2/2. It functions in the pathway cofactor biosynthesis; tetrahydrofolylpolyglutamate biosynthesis. Its function is as follows. Functions in two distinct reactions of the de novo folate biosynthetic pathway. Catalyzes the addition of a glutamate residue to dihydropteroate (7,8-dihydropteroate or H2Pte) to form dihydrofolate (7,8-dihydrofolate monoglutamate or H2Pte-Glu). Also catalyzes successive additions of L-glutamate to tetrahydrofolate or 10-formyltetrahydrofolate or 5,10-methylenetetrahydrofolate, leading to folylpolyglutamate derivatives. This Haemophilus influenzae (strain ATCC 51907 / DSM 11121 / KW20 / Rd) protein is Dihydrofolate synthase/folylpolyglutamate synthase (folC).